Reading from the N-terminus, the 43-residue chain is Thymosin beta-b (43 aa).

Basic and acidic residues-rich tracts occupy residues 1-25 (MADK…ETQE) and 33-43 (ETIEQEKQCEA). The tract at residues 1 to 43 (MADKPDISEVSQFDKTKLKKTETQEKNTLPTKETIEQEKQCEA) is disordered.

The protein belongs to the thymosin beta family.

The protein resides in the cytoplasm. It is found in the cytoskeleton. Plays an important role in the organization of the cytoskeleton. Binds to and sequesters actin monomers (G actin) and therefore inhibits actin polymerization. The sequence is that of Thymosin beta-b from Cyprinus carpio (Common carp).